A 610-amino-acid chain; its full sequence is UvrABC system protein C (610 aa).

Residues Ser-16 to Val-94 form the GIY-YIG domain. The region spanning Gln-204 to Val-239 is the UVR domain.

This sequence belongs to the UvrC family. Interacts with UvrB in an incision complex.

It is found in the cytoplasm. Its function is as follows. The UvrABC repair system catalyzes the recognition and processing of DNA lesions. UvrC both incises the 5' and 3' sides of the lesion. The N-terminal half is responsible for the 3' incision and the C-terminal half is responsible for the 5' incision. This chain is UvrABC system protein C, found in Yersinia pseudotuberculosis serotype I (strain IP32953).